The sequence spans 349 residues: Protein RecA (349 aa).

71-75 serves as a coordination point for phosphate; sequence SSGKT. ATP contacts are provided by residues 71–76 and 102–105; these read SSGKTT and DPEY. Residue glutamine 196 participates in phosphate binding.

This sequence belongs to the RecA family. In terms of assembly, polymerizes non-specifically on ssDNA to form filaments. Interacts with and activates LexA leading to autocatalytic cleavage of LexA, which derepresses the SOS regulon and activates DNA repair.

It is found in the cytoplasm. In terms of biological role, required for homologous recombination (HR) and the bypass of mutagenic DNA lesions (double strand breaks, DSB) by the SOS response. Can catalyze the hydrolysis of ATP in the presence of single-stranded DNA, the ATP-dependent uptake of single-stranded DNA by duplex DNA, and the ATP-dependent hybridization of homologous single-stranded DNAs. Numerous X-ray crystals have been resolved under different conditions which indicate the flexibility of the protein, essential to its function. Gln-196 contributes to this plasticity by acting as a switch residue, which transmits the effect of nucleotide binding to the DNA-binding region. This chain is Protein RecA, found in Mycolicibacterium smegmatis (strain ATCC 700084 / mc(2)155) (Mycobacterium smegmatis).